Here is a 522-residue protein sequence, read N- to C-terminus: Glucose-6-phosphate 1-dehydrogenase (522 aa).

NADP(+) is bound by residues 40-47, R74, and K177; that span reads GASGDLAK. D-glucose 6-phosphate contacts are provided by residues K177, 207-211, E245, and D264; that span reads HYLGK. The active-site Proton acceptor is H269. Residue R364 coordinates NADP(+). D-glucose 6-phosphate-binding residues include K367 and K372. K373, R377, and R401 together coordinate NADP(+). Q403 lines the D-glucose 6-phosphate pocket. NADP(+) contacts are provided by residues 409–411, 429–431, R495, and W517; these read YMK and DLT.

Belongs to the glucose-6-phosphate dehydrogenase family.

The protein localises to the cytoplasm. It is found in the cytosol. It catalyses the reaction D-glucose 6-phosphate + NADP(+) = 6-phospho-D-glucono-1,5-lactone + NADPH + H(+). It functions in the pathway carbohydrate degradation; pentose phosphate pathway; D-ribulose 5-phosphate from D-glucose 6-phosphate (oxidative stage): step 1/3. Cytosolic glucose-6-phosphate dehydrogenase that catalyzes the first and rate-limiting step of the oxidative branch within the pentose phosphate pathway/shunt, an alternative route to glycolysis for the dissimilation of carbohydrates and a major source of reducing power and metabolic intermediates for fatty acid and nucleic acid biosynthetic processes. In Caenorhabditis elegans, this protein is Glucose-6-phosphate 1-dehydrogenase (gspd-1).